The primary structure comprises 263 residues: uncharacterized protein (263 aa).

7 helical membrane-spanning segments follow: residues 53 to 73, 103 to 123, 130 to 150, 153 to 173, 181 to 201, 213 to 233, and 241 to 261; these read FWII…LVKI, GFLF…LPGL, IILP…VFSY, LIPA…EPLW, FILV…IQIL, MLAA…ILTP, and LLLS…LFLI.

This sequence belongs to the TatC family.

Its subcellular location is the plastid. The protein resides in the chloroplast membrane. This is an uncharacterized protein from Trieres chinensis (Marine centric diatom).